The chain runs to 667 residues: Probable export ATP-binding/permease protein MacB (667 aa).

Positions 22 to 260 (LRLAGVSRRF…PVEEVQPAAE (239 aa)) constitute an ABC transporter domain. ATP is bound at residue 58-65 (GASGSGKS). 4 helical membrane-spanning segments follow: residues 292 to 312 (LLTM…SAIG), 540 to 560 (LTLL…IGVM), 601 to 621 (IGGV…ALFV), and 630 to 650 (LGSI…FGFV).

The protein belongs to the ABC transporter superfamily. Macrolide exporter (TC 3.A.1.122) family. Probably part of a tripartite efflux system, which is composed of an inner membrane transporter, a periplasmic membrane fusion protein, and an outer membrane component.

The protein resides in the cell inner membrane. In terms of biological role, probably part of a tripartite efflux system. The sequence is that of Probable export ATP-binding/permease protein MacB from Pseudomonas entomophila (strain L48).